A 141-amino-acid chain; its full sequence is Large ribosomal subunit protein uL11 (141 aa).

The protein belongs to the universal ribosomal protein uL11 family. As to quaternary structure, part of the ribosomal stalk of the 50S ribosomal subunit. Interacts with L10 and the large rRNA to form the base of the stalk. L10 forms an elongated spine to which L12 dimers bind in a sequential fashion forming a multimeric L10(L12)X complex. Post-translationally, one or more lysine residues are methylated.

In terms of biological role, forms part of the ribosomal stalk which helps the ribosome interact with GTP-bound translation factors. This chain is Large ribosomal subunit protein uL11, found in Nostoc sp. (strain PCC 7120 / SAG 25.82 / UTEX 2576).